The following is a 289-amino-acid chain: Syntaxin-2 (289 aa).

The Cytoplasmic segment spans residues 1–265; the sequence is MRDRLPDLTA…KYQSKARRKK (265 aa). Residues 68–101 adopt a coiled-coil conformation; that stretch reads EGKIKEELEDLDKEIKKTANRIRGKLKSIEQSCD. One can recognise a t-SNARE coiled-coil homology domain in the interval 192–254; the sequence is LNEIESRHKD…EHAKEETKKA (63 aa). A helical; Anchor for type IV membrane protein membrane pass occupies residues 266–289; sequence WIIAAVAVAVIAVLALIIGLSVGK.

The protein belongs to the syntaxin family. Interacts with SYT6 and SYT8; the interaction is Ca(2+)-dependent.

It is found in the membrane. In terms of biological role, essential for epithelial morphogenesis. May mediate Ca(2+)-regulation of exocytosis acrosomal reaction in sperm. The protein is Syntaxin-2 (Stx2) of Mus musculus (Mouse).